Reading from the N-terminus, the 242-residue chain is MLANPLSQFLIKPIIPLKALGYNISITNSAVAMIFVSIAASLLLIIAFVNSKLVPSRWQAFGEILYESNIKLVHSIIGPQGKVFFPLILTLFLFISLGNIIGMVPHAFTFTSHIIVTFSLAMIVFTTTLVYGIYRHKLGFFSLFLPKNIPLWLAPIMVIIELCVFISKPISLSLRLTANMVAGHILLKIIAWSIVSLTWFFKPLPIALVIVLIGFELFISILQAYIFTILSCVYLRDVVNLH.

The next 6 membrane-spanning stretches (helical) occupy residues 29 to 49 (SAVAMIFVSIAASLLLIIAFV), 83 to 103 (VFFPLILTLFLFISLGNIIGM), 114 to 134 (IIVTFSLAMIVFTTTLVYGIY), 140 to 160 (FFSLFLPKNIPLWLAPIMVII), 181 to 201 (VAGHILLKIIAWSIVSLTWFF), and 206 to 226 (IALVIVLIGFELFISILQAYI).

This sequence belongs to the ATPase A chain family. As to quaternary structure, F-type ATPases have 2 components, CF(1) - the catalytic core - and CF(0) - the membrane proton channel. CF(1) has five subunits: alpha(3), beta(3), gamma(1), delta(1), epsilon(1). CF(0) has three main subunits: a(1), b(2) and c(9-12). The alpha and beta chains form an alternating ring which encloses part of the gamma chain. CF(1) is attached to CF(0) by a central stalk formed by the gamma and epsilon chains, while a peripheral stalk is formed by the delta and b chains.

It localises to the cell inner membrane. Functionally, key component of the proton channel; it plays a direct role in the translocation of protons across the membrane. The sequence is that of ATP synthase subunit a from Orientia tsutsugamushi (strain Boryong) (Rickettsia tsutsugamushi).